Reading from the N-terminus, the 683-residue chain is Cytochrome P450 monooxygenase htyF (683 aa).

Residues 8–28 (PALLAASVVLAVSLVSYVIQL) form a helical membrane-spanning segment. Residue Asn29 is glycosylated (N-linked (GlcNAc...) asparagine). Cys481 contributes to the heme binding site. An N-linked (GlcNAc...) asparagine glycan is attached at Asn581. Residues 588-608 (LYVFVVLVACVAALFIGIGIY) traverse the membrane as a helical segment.

The protein belongs to the cytochrome P450 family. Heme is required as a cofactor.

It localises to the membrane. It functions in the pathway antifungal biosynthesis. Its function is as follows. Cytochrome P450 monooxygenase; part of the gene cluster that mediates the de novo generation of L-homotyrosine from acetyl-CoA and 4-hydroxyphenyl-pyruvate. L-homotyrosine is a building block of echinocandin B, a fungal lipidated cyclic hexapeptide that acts as an antifungal agent. L-homotyrosine 4-hydroxyphenyl-pyruvate first undergoes an aldol-type condensation by htyA with the C-2 of acetyl-CoA followed by the release of CoA to form 2-(4-hydroxybenzyl)-malate. This is followed by isomerization of 2-(4-hydroxy-benzyl)-malate to 3-(4-hydroxybenzyl)-malate by htyD. Thereafter, 3-(4-hydroxybenzyl)-malate undergoes decarboxylation and oxidation to form 2-oxo-4-(4-hydroxybenzyl)butanoic acid, coupled to reduction of NAD(+) to NADH by htyC. The product then undergoes transamination catalyzed by htyB to form L-homotyrosine. This chain is Cytochrome P450 monooxygenase htyF, found in Aspergillus rugulosus (Emericella rugulosa).